We begin with the raw amino-acid sequence, 548 residues long: Chaperonin GroEL (548 aa).

ATP-binding positions include 29 to 32 (TLGP), lysine 50, 86 to 90 (DGTTT), glycine 416, and aspartate 497.

The protein belongs to the chaperonin (HSP60) family. In terms of assembly, forms a cylinder of 14 subunits composed of two heptameric rings stacked back-to-back. Interacts with the co-chaperonin GroES.

The protein resides in the cytoplasm. It carries out the reaction ATP + H2O + a folded polypeptide = ADP + phosphate + an unfolded polypeptide.. Functionally, together with its co-chaperonin GroES, plays an essential role in assisting protein folding. The GroEL-GroES system forms a nano-cage that allows encapsulation of the non-native substrate proteins and provides a physical environment optimized to promote and accelerate protein folding. The chain is Chaperonin GroEL from Neorickettsia risticii (Ehrlichia risticii).